A 372-amino-acid chain; its full sequence is Cytochrome b (372 aa).

A run of 4 helical transmembrane segments spans residues 32 to 52 (LGFN…CLSW), 77 to 99 (FIIR…IHII), 114 to 134 (VWFF…IGYT), and 180 to 200 (LHSI…AHFF). His-83 and His-97 together coordinate heme b. Residues His-184 and His-198 each contribute to the heme b site. An a ubiquinone-binding site is contributed by His-203. 4 helical membrane-spanning segments follow: residues 228–248 (YYLR…YYIC), 297–317 (LLFV…LIFI), 330–350 (LVLF…VLCF), and 351–371 (PLWM…VCRL).

It belongs to the cytochrome b family. As to quaternary structure, the main subunits of complex b-c1 are: cytochrome b, cytochrome c1 and the Rieske protein. Requires heme b as cofactor.

The protein localises to the mitochondrion inner membrane. Its function is as follows. Component of the ubiquinol-cytochrome c reductase complex (complex III or cytochrome b-c1 complex) that is part of the mitochondrial respiratory chain. The b-c1 complex mediates electron transfer from ubiquinol to cytochrome c. Contributes to the generation of a proton gradient across the mitochondrial membrane that is then used for ATP synthesis. The chain is Cytochrome b (MT-CYB) from Trypanoplasma borreli.